The chain runs to 196 residues: Homeobox protein XENK-2 (196 aa).

Residues 48 to 72 are disordered; that stretch reads PSADESPDNDKELSSNPDSGKKRKR. The segment at residues 69-128 is a DNA-binding region (homeobox); it reads KRKRRVLFSKAQTYELERRFRQQRYLSAPEREHLASLIRLTPTQVKIWFQNHRYKMKRAR.

Belongs to the NK-2 homeobox family. Forebrain and midbrain.

Its subcellular location is the nucleus. Its function is as follows. Defines dorsal-ventral domains in developing brain. May play a role in defining positional information along the anterior-posterior (a/p) axis and the dorsal-ventral (d/v) axis of the developing nervous system. May be involved in determining positional or boundary information rather than determining a given cell type. This chain is Homeobox protein XENK-2, found in Xenopus laevis (African clawed frog).